Reading from the N-terminus, the 235-residue chain is Uridylate kinase (235 aa).

9–12 (KLSG) contacts ATP. Glycine 51 contributes to the UMP binding site. 2 residues coordinate ATP: glycine 52 and arginine 56. Residues aspartate 71 and 132–139 (TGNPYFTT) each bind UMP. Threonine 159, tyrosine 165, and aspartate 168 together coordinate ATP.

It belongs to the UMP kinase family. Homohexamer.

The protein resides in the cytoplasm. It catalyses the reaction UMP + ATP = UDP + ADP. Its pathway is pyrimidine metabolism; CTP biosynthesis via de novo pathway; UDP from UMP (UMPK route): step 1/1. Inhibited by UTP. Catalyzes the reversible phosphorylation of UMP to UDP. This Cytophaga hutchinsonii (strain ATCC 33406 / DSM 1761 / CIP 103989 / NBRC 15051 / NCIMB 9469 / D465) protein is Uridylate kinase.